The primary structure comprises 352 residues: MLEQLSYLHGVPAAKGILKAEASDFVVVEDLGFEPCGEGEHIFVRVRKTGENTAWVAGLLADAAGVNRNAVTWAGLKDRHAVTEQWFGIHLPGKAEPDLSVVESDSIQILQARRHNRKLRVGYLKGNHFTLRLTGLAQADGLEARLQAIATQGVPNYYGEQRFGRGGNNLEAAKAMFAGKRIKDRNKRSLYLSAARSMLFNAIVSARIEQGLAHQLLAGDCVMLKGSHSIFSEEVLTPELAARLASGDVQLTASLWGRGRLASQGAAAEFEQAVLAPYAEWCDGLEKAGLDQDRRPLLLKPEQMSWLLDGEVLTLSFFLPAGAFATSVVRELMQAEEADHGFRNQSDANSGQ.

The active-site Nucleophile is Asp78. A TRUD domain is found at 153 to 299 (GVPNYYGEQR…LDQDRRPLLL (147 aa)).

Belongs to the pseudouridine synthase TruD family.

It carries out the reaction uridine(13) in tRNA = pseudouridine(13) in tRNA. Its function is as follows. Responsible for synthesis of pseudouridine from uracil-13 in transfer RNAs. This chain is tRNA pseudouridine synthase D, found in Aeromonas salmonicida (strain A449).